Here is a 942-residue protein sequence, read N- to C-terminus: Cilia- and flagella-associated protein 69 (942 aa).

A compositionally biased stretch (low complexity) spans 1-16; that stretch reads MSTAEASATTADAAEA. The disordered stretch occupies residues 1-25; it reads MSTAEASATTADAAEAGGRTKTGSP.

Expressed in ciliated olfactory sensory neurons (at protein level). Expressed in testis, specifically in sperm (at protein level).

It is found in the cell projection. It localises to the cilium. Its subcellular location is the flagellum. Its function is as follows. Cilium- and flagellum-associated protein. In the olfactory epithelium, regulates the speed of activation and termination of the odor response and thus contributes to the robustness of olfactory transduction pathways. Required for sperm flagellum assembly and stability. The polypeptide is Cilia- and flagella-associated protein 69 (Mus musculus (Mouse)).